The primary structure comprises 427 residues: Histidine--tRNA ligase (427 aa).

The protein belongs to the class-II aminoacyl-tRNA synthetase family. In terms of assembly, homodimer.

It is found in the cytoplasm. The enzyme catalyses tRNA(His) + L-histidine + ATP = L-histidyl-tRNA(His) + AMP + diphosphate + H(+). This is Histidine--tRNA ligase from Deinococcus radiodurans (strain ATCC 13939 / DSM 20539 / JCM 16871 / CCUG 27074 / LMG 4051 / NBRC 15346 / NCIMB 9279 / VKM B-1422 / R1).